We begin with the raw amino-acid sequence, 589 residues long: UvrABC system protein C (589 aa).

The GIY-YIG domain maps to Glu10 to Ile87. One can recognise a UVR domain in the interval Ser197–Ile232.

This sequence belongs to the UvrC family. As to quaternary structure, interacts with UvrB in an incision complex.

It localises to the cytoplasm. The UvrABC repair system catalyzes the recognition and processing of DNA lesions. UvrC both incises the 5' and 3' sides of the lesion. The N-terminal half is responsible for the 3' incision and the C-terminal half is responsible for the 5' incision. In Fusobacterium nucleatum subsp. nucleatum (strain ATCC 25586 / DSM 15643 / BCRC 10681 / CIP 101130 / JCM 8532 / KCTC 2640 / LMG 13131 / VPI 4355), this protein is UvrABC system protein C.